A 161-amino-acid polypeptide reads, in one-letter code: Regulator of ribonuclease activity A (161 aa).

This sequence belongs to the RraA family. In terms of assembly, homotrimer. Binds to both RNA-binding sites in the C-terminal region of Rne and to RhlB.

It localises to the cytoplasm. Functionally, globally modulates RNA abundance by binding to RNase E (Rne) and regulating its endonucleolytic activity. Can modulate Rne action in a substrate-dependent manner by altering the composition of the degradosome. Modulates RNA-binding and helicase activities of the degradosome. This is Regulator of ribonuclease activity A from Alteromonas mediterranea (strain DSM 17117 / CIP 110805 / LMG 28347 / Deep ecotype).